The following is a 262-amino-acid chain: Pyridoxine 5'-phosphate synthase (262 aa).

Residue N6 participates in 3-amino-2-oxopropyl phosphate binding. 8–9 is a 1-deoxy-D-xylulose 5-phosphate binding site; the sequence is DH. Position 17 (R17) interacts with 3-amino-2-oxopropyl phosphate. The active-site Proton acceptor is H43. 1-deoxy-D-xylulose 5-phosphate-binding residues include R45 and H50. The active-site Proton acceptor is the E70. T102 is a binding site for 1-deoxy-D-xylulose 5-phosphate. The active-site Proton donor is the H215. 3-amino-2-oxopropyl phosphate contacts are provided by residues G216 and 237–238; that span reads GH.

It belongs to the PNP synthase family. In terms of assembly, homooctamer; tetramer of dimers.

It localises to the cytoplasm. It carries out the reaction 3-amino-2-oxopropyl phosphate + 1-deoxy-D-xylulose 5-phosphate = pyridoxine 5'-phosphate + phosphate + 2 H2O + H(+). The protein operates within cofactor biosynthesis; pyridoxine 5'-phosphate biosynthesis; pyridoxine 5'-phosphate from D-erythrose 4-phosphate: step 5/5. In terms of biological role, catalyzes the complicated ring closure reaction between the two acyclic compounds 1-deoxy-D-xylulose-5-phosphate (DXP) and 3-amino-2-oxopropyl phosphate (1-amino-acetone-3-phosphate or AAP) to form pyridoxine 5'-phosphate (PNP) and inorganic phosphate. The protein is Pyridoxine 5'-phosphate synthase of Helicobacter pylori (strain Shi470).